The primary structure comprises 390 residues: ATP-sensitive inward rectifier potassium channel 11 (390 aa).

Topologically, residues 1-65 are cytoplasmic; sequence MLSRKGIIPE…LQDVFTTLVD (65 aa). 2 residues coordinate ATP: Asn-48 and Arg-50. The chain crosses the membrane as a helical span at residues 66–92; sequence LKWPHTLLIFTMSFLCSWLLFAMAWWL. The Extracellular segment spans residues 93–116; the sequence is IAFAHGDLAPSEGTAEPCVTSIHS. Cysteines 110 and 142 form a disulfide. An intramembrane region (discontinuously helical; Pore-forming) is located at residues 117 to 133; sequence FSSAFLFSIEVQVTIGF. Residues Thr-130 and Phe-133 each contribute to the K(+) site. The Selectivity filter signature appears at 130-135; the sequence is TIGFGG. Residues 134–142 lie on the Extracellular side of the membrane; that stretch reads GGRMVTEEC. A helical membrane pass occupies residues 143-171; it reads PLAILILIVQNIVGLMINAIMLGCIFMKT. Over 172-390 the chain is Cytoplasmic; sequence AQAHRRAETL…KFSISPDSLS (219 aa). An a 1,2-diacyl-sn-glycero-3-phospho-(1D-myo-inositol-4,5-bisphosphate)-binding site is contributed by Arg-176. Tyr-330 is a binding site for ATP. Thr-341 bears the Phosphothreonine; by MAPK1 mark. Ser-385 carries the phosphoserine; by MAPK1 modification.

It belongs to the inward rectifier-type potassium channel (TC 1.A.2.1) family. KCNJ11 subfamily. In terms of assembly, homotetramer; the homotetramer binds four ATP molecules (one ATP per subunit). Forms an heterooctamer with ABCC8/SUR1; one KCNJ11 homotetramer interacts with four ABCC8/SUR1 molecules. Interacts with ABCC9/SUR2. Phosphorylation by MAPK1 results in changes in channel gating that destabilize the closed states and reduce the ATP sensitivity.

The protein localises to the membrane. The catalysed reaction is K(+)(in) = K(+)(out). Its activity is regulated as follows. KATP channels are regulated by cytoplasmic ATP/ADP ratios; ATP inhibits the channel by closing the pore, while ADP activates the channel. Activated by phosphatidylinositol 4,5-biphosphate (PtdIns(4,5)P2). Inward rectifier potassium channel that forms the pore of ATP-sensitive potassium channels (KATP), regulating potassium permeability as a function of cytoplasmic ATP and ADP concentrations in many different cells. Inward rectifier potassium channels are characterized by a greater tendency to allow potassium to flow into the cell rather than out of it. Their voltage dependence is regulated by the concentration of extracellular potassium; as external potassium is raised, the voltage range of the channel opening shifts to more positive voltages. The inward rectification is mainly due to the blockage of outward current by internal magnesium. Can be blocked by extracellular barium. In pancreatic cells, it forms KATP channels with ABCC8/SUR1. Can form cardiac and smooth muscle-type KATP channels with ABCC9. The protein is ATP-sensitive inward rectifier potassium channel 11 (KCNJ11) of Homo sapiens (Human).